The chain runs to 498 residues: Lysine--tRNA ligase (498 aa).

2 residues coordinate Mg(2+): glutamate 408 and glutamate 415.

Belongs to the class-II aminoacyl-tRNA synthetase family. As to quaternary structure, homodimer. It depends on Mg(2+) as a cofactor.

The protein resides in the cytoplasm. It catalyses the reaction tRNA(Lys) + L-lysine + ATP = L-lysyl-tRNA(Lys) + AMP + diphosphate. The polypeptide is Lysine--tRNA ligase (Listeria monocytogenes serovar 1/2a (strain ATCC BAA-679 / EGD-e)).